The following is a 655-amino-acid chain: UvrABC system protein B (655 aa).

The region spanning 25–181 is the Helicase ATP-binding domain; sequence DGINKGEKEQ…IRKLVFMQYE (157 aa). ATP is bound at residue 38-45; sequence GVTGSGKT. Positions 91 to 114 match the Beta-hairpin motif; it reads YYDYYQPEAYVPRTDTFIDKESSV. Residues 428–590 form the Helicase C-terminal domain; sequence QVEDLLGEVK…IVPKTTKRAL (163 aa). The UVR domain occupies 615–650; it reads RLLISDLENDMKEAAAKLDFERAASLRDQIATLKGL.

It belongs to the UvrB family. As to quaternary structure, forms a heterotetramer with UvrA during the search for lesions. Interacts with UvrC in an incision complex.

Its subcellular location is the cytoplasm. The UvrABC repair system catalyzes the recognition and processing of DNA lesions. A damage recognition complex composed of 2 UvrA and 2 UvrB subunits scans DNA for abnormalities. Upon binding of the UvrA(2)B(2) complex to a putative damaged site, the DNA wraps around one UvrB monomer. DNA wrap is dependent on ATP binding by UvrB and probably causes local melting of the DNA helix, facilitating insertion of UvrB beta-hairpin between the DNA strands. Then UvrB probes one DNA strand for the presence of a lesion. If a lesion is found the UvrA subunits dissociate and the UvrB-DNA preincision complex is formed. This complex is subsequently bound by UvrC and the second UvrB is released. If no lesion is found, the DNA wraps around the other UvrB subunit that will check the other stand for damage. The sequence is that of UvrABC system protein B from Methanobrevibacter smithii (strain ATCC 35061 / DSM 861 / OCM 144 / PS).